The following is a 227-amino-acid chain: Cytochrome c oxidase subunit 2 (227 aa).

The Mitochondrial intermembrane portion of the chain corresponds to 1 to 14 (MAYPFQLGFQDATS). The chain crosses the membrane as a helical span at residues 15–45 (PIMEELLHFHDHTLMIVFLISSLVLYIISLM). Residues 46–59 (LTTKLTHTSTMDAQ) are Mitochondrial matrix-facing. Residues 60–87 (EVETIWTILPAIILILIALPSLRILYMM) form a helical membrane-spanning segment. Topologically, residues 88-227 (DEINNPSLTV…YFEKWSASML (140 aa)) are mitochondrial intermembrane. The Cu cation site is built by His161, Cys196, Glu198, Cys200, His204, and Met207. Position 198 (Glu198) interacts with Mg(2+). Residue Tyr218 is modified to Phosphotyrosine.

Belongs to the cytochrome c oxidase subunit 2 family. Component of the cytochrome c oxidase (complex IV, CIV), a multisubunit enzyme composed of 14 subunits. The complex is composed of a catalytic core of 3 subunits MT-CO1, MT-CO2 and MT-CO3, encoded in the mitochondrial DNA, and 11 supernumerary subunits COX4I, COX5A, COX5B, COX6A, COX6B, COX6C, COX7A, COX7B, COX7C, COX8 and NDUFA4, which are encoded in the nuclear genome. The complex exists as a monomer or a dimer and forms supercomplexes (SCs) in the inner mitochondrial membrane with NADH-ubiquinone oxidoreductase (complex I, CI) and ubiquinol-cytochrome c oxidoreductase (cytochrome b-c1 complex, complex III, CIII), resulting in different assemblies (supercomplex SCI(1)III(2)IV(1) and megacomplex MCI(2)III(2)IV(2)). Found in a complex with TMEM177, COA6, COX18, COX20, SCO1 and SCO2. Interacts with TMEM177 in a COX20-dependent manner. Interacts with COX20. Interacts with COX16. It depends on Cu cation as a cofactor.

It is found in the mitochondrion inner membrane. It carries out the reaction 4 Fe(II)-[cytochrome c] + O2 + 8 H(+)(in) = 4 Fe(III)-[cytochrome c] + 2 H2O + 4 H(+)(out). Functionally, component of the cytochrome c oxidase, the last enzyme in the mitochondrial electron transport chain which drives oxidative phosphorylation. The respiratory chain contains 3 multisubunit complexes succinate dehydrogenase (complex II, CII), ubiquinol-cytochrome c oxidoreductase (cytochrome b-c1 complex, complex III, CIII) and cytochrome c oxidase (complex IV, CIV), that cooperate to transfer electrons derived from NADH and succinate to molecular oxygen, creating an electrochemical gradient over the inner membrane that drives transmembrane transport and the ATP synthase. Cytochrome c oxidase is the component of the respiratory chain that catalyzes the reduction of oxygen to water. Electrons originating from reduced cytochrome c in the intermembrane space (IMS) are transferred via the dinuclear copper A center (CU(A)) of subunit 2 and heme A of subunit 1 to the active site in subunit 1, a binuclear center (BNC) formed by heme A3 and copper B (CU(B)). The BNC reduces molecular oxygen to 2 water molecules using 4 electrons from cytochrome c in the IMS and 4 protons from the mitochondrial matrix. The sequence is that of Cytochrome c oxidase subunit 2 (MT-CO2) from Felis catus (Cat).